The following is an 887-amino-acid chain: Alanine--tRNA ligase (887 aa).

Zn(2+)-binding residues include His564, His568, Cys676, and His680.

This sequence belongs to the class-II aminoacyl-tRNA synthetase family. The cofactor is Zn(2+).

The protein resides in the cytoplasm. It carries out the reaction tRNA(Ala) + L-alanine + ATP = L-alanyl-tRNA(Ala) + AMP + diphosphate. Catalyzes the attachment of alanine to tRNA(Ala) in a two-step reaction: alanine is first activated by ATP to form Ala-AMP and then transferred to the acceptor end of tRNA(Ala). Also edits incorrectly charged Ser-tRNA(Ala) and Gly-tRNA(Ala) via its editing domain. The chain is Alanine--tRNA ligase from Agrobacterium fabrum (strain C58 / ATCC 33970) (Agrobacterium tumefaciens (strain C58)).